A 152-amino-acid chain; its full sequence is Nucleoside diphosphate kinase B (152 aa).

Residues 1–66 (MANLERTFIA…DRPFFPGLVK (66 aa)) form an interaction with AKAP13 region. ATP-binding residues include K12, F60, R88, T94, R105, and N115. The active-site Pros-phosphohistidine intermediate is H118.

This sequence belongs to the NDK family. As to quaternary structure, hexamer of two different chains: An and B (A6, A5B, A4B2, A3B3, A2B4, AB5, B6). Interacts with CAPN8. Interacts with AKAP13. Interacts with ITGB1BP1 (via C-terminal domain region). Interacts with BCL2L10. Mg(2+) is required as a cofactor. In terms of tissue distribution, ubiquitously expressed.

It localises to the cytoplasm. The protein localises to the cell projection. It is found in the lamellipodium. The protein resides in the ruffle. Its subcellular location is the perinuclear region. It localises to the nucleus. It catalyses the reaction a 2'-deoxyribonucleoside 5'-diphosphate + ATP = a 2'-deoxyribonucleoside 5'-triphosphate + ADP. The enzyme catalyses a ribonucleoside 5'-diphosphate + ATP = a ribonucleoside 5'-triphosphate + ADP. The catalysed reaction is ATP + protein L-histidine = ADP + protein N-phospho-L-histidine.. Functionally, major role in the synthesis of nucleoside triphosphates other than ATP. The ATP gamma phosphate is transferred to the NDP beta phosphate via a ping-pong mechanism, using a phosphorylated active-site intermediate. Negatively regulates Rho activity by interacting with AKAP13/LBC. Acts as a transcriptional activator of the MYC gene; binds DNA non-specifically. Binds to both single-stranded guanine- and cytosine-rich strands within the nuclease hypersensitive element (NHE) III(1) region of the MYC gene promoter. Does not bind to duplex NHE III(1). Has G-quadruplex (G4) DNA-binding activity, which is independent of its nucleotide-binding and kinase activity. Binds both folded and unfolded G4 with similar low nanomolar affinities. Stabilizes folded G4s regardless of whether they are prefolded or not. Exhibits histidine protein kinase activity. This is Nucleoside diphosphate kinase B (NME2) from Homo sapiens (Human).